The sequence spans 636 residues: tRNA 5-methylaminomethyl-2-thiouridine biosynthesis bifunctional protein MnmC (636 aa).

The tRNA (mnm(5)s(2)U34)-methyltransferase stretch occupies residues 1–202 (MTVSKILKQV…ERAALRAQSH (202 aa)). Residues 227 to 636 (IGGGVASACL…GKALEMSGKS (410 aa)) form an FAD-dependent cmnm(5)s(2)U34 oxidoreductase region.

In the N-terminal section; belongs to the methyltransferase superfamily. tRNA (mnm(5)s(2)U34)-methyltransferase family. It in the C-terminal section; belongs to the DAO family. FAD is required as a cofactor.

It is found in the cytoplasm. It catalyses the reaction 5-aminomethyl-2-thiouridine(34) in tRNA + S-adenosyl-L-methionine = 5-methylaminomethyl-2-thiouridine(34) in tRNA + S-adenosyl-L-homocysteine + H(+). Catalyzes the last two steps in the biosynthesis of 5-methylaminomethyl-2-thiouridine (mnm(5)s(2)U) at the wobble position (U34) in tRNA. Catalyzes the FAD-dependent demodification of cmnm(5)s(2)U34 to nm(5)s(2)U34, followed by the transfer of a methyl group from S-adenosyl-L-methionine to nm(5)s(2)U34, to form mnm(5)s(2)U34. In Shewanella halifaxensis (strain HAW-EB4), this protein is tRNA 5-methylaminomethyl-2-thiouridine biosynthesis bifunctional protein MnmC.